The primary structure comprises 212 residues: Spore germination lipase LipC (212 aa).

The Nucleophile role is filled by serine 11. Residues glycine 50 and asparagine 82 each contribute to the substrate site. Catalysis depends on residues aspartate 186 and histidine 189.

This sequence belongs to the 'GDSL' lipolytic enzyme family.

Its subcellular location is the spore coat. Functionally, lipase involved in spore germination. This chain is Spore germination lipase LipC (lipC), found in Bacillus licheniformis (strain ATCC 14580 / DSM 13 / JCM 2505 / CCUG 7422 / NBRC 12200 / NCIMB 9375 / NCTC 10341 / NRRL NRS-1264 / Gibson 46).